We begin with the raw amino-acid sequence, 1585 residues long: Maestro heat-like repeat-containing protein family member 2B (1585 aa).

HEAT repeat units lie at residues 28–65 (VNKEDIYSHLTSVIQNTDILDDAIVQRLIYYASKDMRD), 228–263 (GYALGQVPWLLNQYKDKEIDFHVTQSLKQILTAAVL), 272–309 (LRRSIFINLLQQICRAPEPPVKENEMKASSCFLILAHS), 310–346 (NPGELMEFFDEQVRSNNEAIRVGILTLLRLAVNADEP), 405–445 (TLNR…LVIG), 531–569 (IGLLKILPEIIHPKLVDLWKTRLPELLQPLEGKNISTVL), 572–611 (TMLLQLLKESLWKISDVAWTIQLTQDFKQQMGSYSNNSTE), 662–699 (ENHLDIVLKVLKTFQNQEKFFMNRCKSLFSGKKSLTKT), 777–819 (SYKE…LKPQ), 964–1001 (HLEVERLQGLQEGLESDDVQVQIKISSKIAKIVSKFIP), 1021–1059 (PTCTKACGIWMITVLKQQGAALEDQLLEILGTIYHHMPV), 1112–1151 (ASSGKLLQALIDKLETELEDDIARVEAISVACAMYEVISM), 1157–1195 (GLYPELFTLLLKLVSCTLGQKMLTCPWSHRRHVMQQGEQ), 1258–1295 (GVILDIMEQLLSSLTSSSENYRITGAAFFSELMKEPIL), and 1363–1402 (CESLKALKKILELLTDRDVSFYFKEIVLQTRTFFEDEQDD).

In terms of assembly, found in a complex at least composed of MROH2B, PRKACA isoform 2 and TCP11. Interacts with PRKACA. Interacts with TCP11. Constitutively phosphorylated on serine and threonine residues in acrosomal region of the sperm head, midpiece and flagellar regions of noncapacitated spermatozoa. Phosphorylation on tyrosine residues increases upon sperm capacitation within the acrosomal and tail regions in a protein kinase A (PKA)-dependent signaling pathway.

Its subcellular location is the cytoplasm. It localises to the cytoplasmic vesicle. The protein localises to the secretory vesicle. The protein resides in the acrosome. It is found in the cell projection. Its subcellular location is the cilium. It localises to the flagellum. Its function is as follows. May play a role in the process of sperm capacitation. The sequence is that of Maestro heat-like repeat-containing protein family member 2B from Homo sapiens (Human).